A 122-amino-acid polypeptide reads, in one-letter code: Large ribosomal subunit protein uL14c (122 aa).

This sequence belongs to the universal ribosomal protein uL14 family. Part of the 50S ribosomal subunit.

It is found in the plastid. The protein localises to the chloroplast. Its function is as follows. Binds to 23S rRNA. The sequence is that of Large ribosomal subunit protein uL14c from Psilotum nudum (Whisk fern).